Here is a 196-residue protein sequence, read N- to C-terminus: Large ribosomal subunit protein uL10 (196 aa).

The interval 169 to 196 (KAAECPAEAPQPAAETPAEAPEAPADAE) is disordered. A compositionally biased stretch (low complexity) spans 172 to 196 (ECPAEAPQPAAETPAEAPEAPADAE).

The protein belongs to the universal ribosomal protein uL10 family. Part of the ribosomal stalk of the 50S ribosomal subunit. The N-terminus interacts with L11 and the large rRNA to form the base of the stalk. The C-terminus forms an elongated spine to which L12 dimers bind in a sequential fashion forming a multimeric L10(L12)X complex.

Functionally, forms part of the ribosomal stalk, playing a central role in the interaction of the ribosome with GTP-bound translation factors. This is Large ribosomal subunit protein uL10 from Mycobacterium avium (strain 104).